The chain runs to 358 residues: Fructose-bisphosphate aldolase 6, cytosolic (358 aa).

At Ser2 the chain carries N-acetylserine. Arg39 serves as a coordination point for substrate. At Cys68 the chain carries S-glutathionyl cysteine; transient. Cys173 is modified (S-glutathionyl cysteine; transient; alternate). Cys173 is subject to S-nitrosocysteine; transient; alternate. Glu183 acts as the Proton acceptor in catalysis. The active-site Schiff-base intermediate with dihydroxyacetone-P is the Lys225. Substrate contacts are provided by residues 266–268 and Arg298; that span reads SGG. Phosphoserine is present on Ser350. Lys354 bears the N6,N6,N6-trimethyllysine mark.

The protein belongs to the class I fructose-bisphosphate aldolase family. In terms of assembly, homotetramer. Interacts with TRX1 and TRX3. Interacts with GAPC1 and VDAC3. S-glutathionylated at Cys-68 and Cys-173. In terms of processing, S-nitrosylated at Cys-173. In terms of tissue distribution, expressed in roots, rosettes leaves, cauline leaves, stems and flowers.

Its subcellular location is the cytoplasm. It localises to the cytosol. It is found in the nucleus. The protein resides in the mitochondrion. The catalysed reaction is beta-D-fructose 1,6-bisphosphate = D-glyceraldehyde 3-phosphate + dihydroxyacetone phosphate. It participates in carbohydrate degradation; glycolysis; D-glyceraldehyde 3-phosphate and glycerone phosphate from D-glucose: step 4/4. Its activity is regulated as follows. Total and irreversible inhibition by S-nitrosoglutathione (GSNO). Partial and reversible inhibition by oxidized glutathione (GSSG). Its function is as follows. Fructose-bisphosphate aldolase that plays a key role in glycolysis and gluconeogenesis. Associates with GAPC1 to the outer mitochondrial membrane, in a redox-dependent manner, leading to binding and bundling of actin. Actin binding and bundling occurs under oxidizing conditions and is reversible under reducing conditions. May be part of a redox-dependent retrograde signal transduction network for adaptation upon oxidative stress. The chain is Fructose-bisphosphate aldolase 6, cytosolic from Arabidopsis thaliana (Mouse-ear cress).